A 368-amino-acid polypeptide reads, in one-letter code: Peptide chain release factor 2 (368 aa).

At Gln-250 the chain carries N5-methylglutamine.

Belongs to the prokaryotic/mitochondrial release factor family. In terms of processing, methylated by PrmC. Methylation increases the termination efficiency of RF2.

The protein localises to the cytoplasm. Peptide chain release factor 2 directs the termination of translation in response to the peptide chain termination codons UGA and UAA. The protein is Peptide chain release factor 2 of Chlamydia trachomatis serovar L2b (strain UCH-1/proctitis).